The following is an 863-amino-acid chain: Ubiquitin carboxyl-terminal hydrolase 13 (863 aa).

At S114 the chain carries Phosphoserine. T122 is modified (phosphothreonine). The UBP-type; degenerate zinc-finger motif lies at 187–295; the sequence is PVSKYANNLT…KHLAHFGIDM (109 aa). Residues C211, C214, C231, and H244 each contribute to the Zn(2+) site. K311 participates in a covalent cross-link: Glycyl lysine isopeptide (Lys-Gly) (interchain with G-Cter in SUMO2). The 526-residue stretch at 336-861 folds into the USP domain; sequence TGLKNLGNSC…LGYMYFYRRI (526 aa). The active-site Nucleophile is the C345. Residue K405 forms a Glycyl lysine isopeptide (Lys-Gly) (interchain with G-Cter in SUMO2) linkage. 2 UBA domains span residues 652 to 693 and 727 to 767; these read DIDE…IVVH and QPPE…IFSH. H823 (proton acceptor) is an active-site residue.

The protein belongs to the peptidase C19 family. Interacts with UFD1. Interacts (via UBA domains) with SIAH2 (when ubiquitinated). Interacts with BAG6; the interaction is direct and may mediate UBL4A deubiquitination. Interacts (via UBA 2 domain) with AMFR; the interaction is direct. Interacts with UBL4A; may be indirect via BAG6. Interacts with NEDD4.

The protein localises to the cytoplasm. The enzyme catalyses Thiol-dependent hydrolysis of ester, thioester, amide, peptide and isopeptide bonds formed by the C-terminal Gly of ubiquitin (a 76-residue protein attached to proteins as an intracellular targeting signal).. With respect to regulation, specifically inhibited by spautin-1 (specific and potent autophagy inhibitor-1), a derivative of MBCQ that binds to USP13 and inhibits deubiquitinase activity. Regulated by PIK3C3/VPS34-containing complexes. The weak deubiquitinase activity in vitro suggests the existence of some mechanism that activates the enzyme. Its function is as follows. Deubiquitinase that mediates deubiquitination of target proteins such as BECN1, MITF, SKP2 and USP10 and is involved in various processes such as autophagy, endoplasmic reticulum-associated degradation (ERAD), cell cycle progression or DNA damage response. Component of a regulatory loop that controls autophagy and p53/TP53 levels: mediates deubiquitination of BECN1, a key regulator of autophagy, leading to stabilize the PIK3C3/VPS34-containing complexes. Alternatively, forms with NEDD4 a deubiquitination complex, which subsequently stabilizes VPS34 to promote autophagy. Also deubiquitinates USP10, an essential regulator of p53/TP53 stability. In turn, PIK3C3/VPS34-containing complexes regulate USP13 stability, suggesting the existence of a regulatory system by which PIK3C3/VPS34-containing complexes regulate p53/TP53 protein levels via USP10 and USP13. Recruited by nuclear UFD1 and mediates deubiquitination of SKP2, thereby regulating endoplasmic reticulum-associated degradation (ERAD). Also regulates ERAD through the deubiquitination of UBL4A a component of the BAG6/BAT3 complex. Mediates stabilization of SIAH2 independently of deubiquitinase activity: binds ubiquitinated SIAH2 and acts by impairing SIAH2 autoubiquitination. Regulates the cell cycle progression by stabilizing cell cycle proteins such as SKP2 and AURKB. In addition, plays an important role in maintaining genomic stability and in DNA replication checkpoint activation via regulation of RAP80 and TOPBP1. Deubiquitinates the multifunctional protein HMGB1 and subsequently drives its nucleocytoplasmic localization and its secretion. Positively regulates type I and type II interferon signalings by deubiquitinating STAT1 but negatively regulates antiviral response by deubiquitinating STING1. The sequence is that of Ubiquitin carboxyl-terminal hydrolase 13 (USP13) from Bos taurus (Bovine).